The chain runs to 255 residues: D-aminoacyl-tRNA deacylase (255 aa).

It belongs to the DtdA deacylase family. Monomer. The cofactor is Zn(2+).

The enzyme catalyses a D-aminoacyl-tRNA + H2O = a tRNA + a D-alpha-amino acid + H(+). It carries out the reaction glycyl-tRNA(Ala) + H2O = tRNA(Ala) + glycine + H(+). D-aminoacyl-tRNA deacylase with broad substrate specificity. By recycling D-aminoacyl-tRNA to D-amino acids and free tRNA molecules, this enzyme counteracts the toxicity associated with the formation of D-aminoacyl-tRNA entities in vivo. This Methanocaldococcus jannaschii (strain ATCC 43067 / DSM 2661 / JAL-1 / JCM 10045 / NBRC 100440) (Methanococcus jannaschii) protein is D-aminoacyl-tRNA deacylase.